A 329-amino-acid polypeptide reads, in one-letter code: T-cell acute lymphocytic leukemia protein 1 homolog (329 aa).

3 disordered regions span residues 1 to 28 (MTER…RMAP), 40 to 78 (ETSR…KGRD), and 91 to 125 (TELC…SPPA). The residue at position 12 (Ser-12) is a Phosphoserine. Positions 58 to 70 (SGAGGGPASGGGA) are enriched in gly residues. Positions 96-106 (PPGPAPAPAPA) are enriched in pro residues. Ser-122 carries the phosphoserine; by MAPK modification. Ser-172 bears the Phosphoserine mark. Positions 187-239 (VRRIFTNSRERWRQQNVNGAFAELRKLIPTHPPDKKLSKNEILRLAMKYINFL) constitute a bHLH domain. Residues 247–329 (EEEGTQRAKP…LPAADGAGPR (83 aa)) form a disordered region. The span at 263–273 (GAGGGGAGGGI) shows a compositional bias: gly residues. The segment covering 317 to 329 (PALLPAADGAGPR) has biased composition (low complexity).

In terms of assembly, efficient DNA binding requires dimerization with another bHLH protein. Forms heterodimers with TCF3. Binds to the LIM domain containing protein LMO2 and to DRG1. Can assemble in a complex with LDB1 and LMO2. Component of a TAL-1 complex composed at least of CBFA2T3, LDB1, TAL1 and TCF3. Interacts with SBNO2; this interaction inhibits TAL1 occupancy of the DCSTAMP promoter, leading to the activation of the DCSTAMP promoter by the transcription factor MITF. Post-translationally, phosphorylated on serine residues. Phosphorylation of Ser-122 by MAPK is strongly stimulated by hypoxia. In terms of processing, ubiquitinated; subsequent to hypoxia-dependent phosphorylation of Ser-122, ubiquitination targets the protein for rapid degradation via the ubiquitin system. This process may be characteristic for microvascular endothelial cells, since it could not be observed in large vessel endothelial cells. Erythroid and myeloid cells.

It is found in the nucleus. Its function is as follows. Implicated in the genesis of hemopoietic malignancies. It may play an important role in hemopoietic differentiation. Serves as a positive regulator of erythroid differentiation. The protein is T-cell acute lymphocytic leukemia protein 1 homolog (Tal1) of Mus musculus (Mouse).